Here is a 953-residue protein sequence, read N- to C-terminus: Zinc finger CCCH domain-containing protein 18 (953 aa).

Methionine 1 is subject to N-acetylmethionine. Positions 1–14 (MDVAESPERDPHSP) are enriched in basic and acidic residues. Disordered stretches follow at residues 1 to 222 (MDVA…RPRP) and 391 to 928 (QYTE…LSRR). At serine 6 the chain carries Phosphoserine. Residues 15 to 26 (EDEEQPQGLSDD) show a composition bias toward acidic residues. Serine 34, serine 46, serine 53, serine 59, serine 67, serine 74, serine 78, serine 83, and serine 95 each carry phosphoserine. Positions 60–72 (QEEEDNHSDEEDR) are enriched in acidic residues. The segment covering 97–106 (CEEEGDEGEE) has biased composition (acidic residues). Residues 105 to 134 (EEDRTSDLRDEASSVTRELDEHELDYDEEV) adopt a coiled-coil conformation. Over residues 107-124 (DRTSDLRDEASSVTRELD) the composition is skewed to basic and acidic residues. Threonine 109 carries the phosphothreonine modification. Phosphoserine is present on residues serine 110 and serine 118. 2 stretches are compositionally biased toward acidic residues: residues 125-136 (EHELDYDEEVPE) and 143-158 (QEDE…DEEK). The span at 159-168 (GEGTPREEGK) shows a compositional bias: basic and acidic residues. Threonine 162 is subject to Phosphothreonine. Residues serine 173 and serine 179 each carry the phosphoserine modification. Residues 175–190 (GEKESLEAAKEKKKED) show a composition bias toward basic and acidic residues. Residues 191–207 (DDGEIDDGEIDDDDLEE) show a composition bias toward acidic residues. Positions 208–217 (GEVKDPSDRK) are enriched in basic and acidic residues. The segment at 219 to 245 (RPRPTCRFFMKGNCTWGMNCRFIHPGV) adopts a C3H1-type zinc-finger fold. Over residues 396-482 (EPYHNYRERE…EKEREKEKGK (87 aa)) the composition is skewed to basic and acidic residues. Residues 399-464 (HNYRERERER…RERAKRDEKD (66 aa)) are a coiled coil. Serine 487 carries the post-translational modification Phosphoserine. Lysine 510 is covalently cross-linked (Glycyl lysine isopeptide (Lys-Gly) (interchain with G-Cter in SUMO2)). Over residues 510 to 520 (KRADEWKDPWR) the composition is skewed to basic and acidic residues. Serine 532, serine 534, and serine 536 each carry phosphoserine. Low complexity predominate over residues 545–606 (SASSASASNS…SRSRSFSSSP (62 aa)). Glycyl lysine isopeptide (Lys-Gly) (interchain with G-Cter in SUMO2) cross-links involve residues lysine 622 and lysine 661. A compositionally biased stretch (basic and acidic residues) spans 661-670 (KPGDPREARR). Composition is skewed to low complexity over residues 692-725 (GSSY…SAHS) and 736-750 (ASPV…PAPA). Residues 760–774 (KKEDGVKEEKRKRDS) show a composition bias toward basic and acidic residues. Lysine 766 is covalently cross-linked (Glycyl lysine isopeptide (Lys-Gly) (interchain with G-Cter in SUMO2)). Residues 778–798 (PPKSAKPPAGGKSSQQPSTPQ) are compositionally biased toward low complexity. Residue lysine 814 is modified to N6-acetyllysine. A Glycyl lysine isopeptide (Lys-Gly) (interchain with G-Cter in SUMO2) cross-link involves residue lysine 817. Basic and acidic residues predominate over residues 824 to 841 (AADKGSRKRYEPSDKDRQ). A phosphoserine mark is found at serine 842, serine 852, serine 868, serine 893, and serine 896. The span at 893 to 906 (SPQSKSSSKVTSVP) shows a compositional bias: low complexity. Lysine 908 participates in a covalent cross-link: Glycyl lysine isopeptide (Lys-Gly) (interchain with G-Cter in SUMO2). The segment covering 916–925 (STKSGKASTL) has biased composition (polar residues). A coiled-coil region spans residues 921 to 950 (KASTLSRREELLKQLKAVEDAIARKRAKIP).

Interacts with ZFC3H1 in a RNase-insensitive manner.

It localises to the nucleus. In Homo sapiens (Human), this protein is Zinc finger CCCH domain-containing protein 18.